The chain runs to 905 residues: Nitrate reductase [NADPH] (905 aa).

A disordered region spans residues 1-42 (METSTTTTLLQQERIPENSEPISTHIHTHSLPPTPPGTAKPS). Residue cysteine 179 participates in Mo-molybdopterin binding. One can recognise a Cytochrome b5 heme-binding domain in the interval 546–621 (NRKITIEELK…LPTYHIGTLD (76 aa)). Heme is bound by residues histidine 581 and histidine 604. The FAD-binding FR-type domain maps to 648-759 (KTWSKAILDK…KGPTGKFVYH (112 aa)). Residues 702–705 (RSYT), 719–723 (LIKIY), 733–735 (VMT), serine 783, and threonine 786 each bind FAD. 875–884 (LLLVCGPPPM) contacts NADP(+).

This sequence belongs to the nitrate reductase family. In terms of assembly, homodimer. Requires FAD as cofactor. Heme serves as cofactor. Mo-molybdopterin is required as a cofactor.

It catalyses the reaction nitrite + NADP(+) + H2O = nitrate + NADPH + H(+). Its function is as follows. Nitrate reductase is a key enzyme involved in the first step of nitrate assimilation in plants, fungi and bacteria. In Fusarium oxysporum (Fusarium vascular wilt), this protein is Nitrate reductase [NADPH] (NIA).